The following is a 222-amino-acid chain: ATP-dependent dethiobiotin synthetase BioD (222 aa).

12 to 17 (DVGKTF) contributes to the ATP binding site. A Mg(2+)-binding site is contributed by Thr-16. Residue Lys-37 is part of the active site. Ser-41 provides a ligand contact to substrate. ATP-binding positions include Asp-54 and 113 to 116 (EGAG). Asp-54 and Glu-113 together coordinate Mg(2+).

The protein belongs to the dethiobiotin synthetase family. In terms of assembly, homodimer. Requires Mg(2+) as cofactor.

It localises to the cytoplasm. It carries out the reaction (7R,8S)-7,8-diammoniononanoate + CO2 + ATP = (4R,5S)-dethiobiotin + ADP + phosphate + 3 H(+). The protein operates within cofactor biosynthesis; biotin biosynthesis; biotin from 7,8-diaminononanoate: step 1/2. Catalyzes a mechanistically unusual reaction, the ATP-dependent insertion of CO2 between the N7 and N8 nitrogen atoms of 7,8-diaminopelargonic acid (DAPA, also called 7,8-diammoniononanoate) to form a ureido ring. The sequence is that of ATP-dependent dethiobiotin synthetase BioD from Anoxybacillus flavithermus (strain DSM 21510 / WK1).